Here is a 243-residue protein sequence, read N- to C-terminus: Type III pantothenate kinase (243 aa).

Residue 7–14 coordinates ATP; sequence DLGNSRFK. Residues Y91 and 98-101 each bind substrate; that span reads GVDR. Residue D100 is the Proton acceptor of the active site. ATP is bound at residue T122. T172 contacts substrate.

The protein belongs to the type III pantothenate kinase family. As to quaternary structure, homodimer. The cofactor is NH4(+). K(+) serves as cofactor.

The protein localises to the cytoplasm. It carries out the reaction (R)-pantothenate + ATP = (R)-4'-phosphopantothenate + ADP + H(+). It functions in the pathway cofactor biosynthesis; coenzyme A biosynthesis; CoA from (R)-pantothenate: step 1/5. Its function is as follows. Catalyzes the phosphorylation of pantothenate (Pan), the first step in CoA biosynthesis. The chain is Type III pantothenate kinase from Stenotrophomonas maltophilia (strain R551-3).